The sequence spans 262 residues: MNPLLLAVDSGNTRVKWGLHDGRNWLMQGVAAQGDRVQLEREWRDLREPSRVVISNVANAGVKGSLSELLAQWKAEPQWITAVPYQCGVRNYYSNPAQLGSDRWAALVAAWVLERQGCLVVDAGTAMTVDALSDTGEFLGGLITPGLDLMQKILVEDLGSLESEGGKFCDYPDSTADALYSGAVHAMAGAIERMAALLAGTLGHMPECILSGGAAQQLQPQLNVNVKVMDNLVLQGLLAIARETSETASGGVVASPEDSIEN.

9–16 contacts ATP; the sequence is DSGNTRVK. Substrate contacts are provided by residues Tyr-93 and 100–103; that span reads GSDR. Asp-102 (proton acceptor) is an active-site residue. Residue Asp-122 coordinates K(+). An ATP-binding site is contributed by Thr-125. Residue Thr-175 coordinates substrate.

It belongs to the type III pantothenate kinase family. As to quaternary structure, homodimer. NH4(+) is required as a cofactor. The cofactor is K(+).

It localises to the cytoplasm. The enzyme catalyses (R)-pantothenate + ATP = (R)-4'-phosphopantothenate + ADP + H(+). It functions in the pathway cofactor biosynthesis; coenzyme A biosynthesis; CoA from (R)-pantothenate: step 1/5. In terms of biological role, catalyzes the phosphorylation of pantothenate (Pan), the first step in CoA biosynthesis. The chain is Type III pantothenate kinase from Nitrosospira multiformis (strain ATCC 25196 / NCIMB 11849 / C 71).